The following is a 387-amino-acid chain: Methionine aminopeptidase 1 (387 aa).

Position 2 is an N-acetylserine (serine 2). Residues 2-10 (STATTTVTT) constitute a propeptide that is removed on maturation. A C6H2-type zinc finger spans residues 19–73 (KIYCSGLQCGRETSSQMKCPVCLKQGIVSIFCDTSCYENNYKAHKALHNAKDGLE). 8 residues coordinate Zn(2+): cysteine 22, cysteine 27, cysteine 37, cysteine 40, cysteine 50, cysteine 54, histidine 62, and histidine 66. Histidine 202 lines the a protein pocket. Positions 219, 230, and 294 each coordinate Zn(2+). Histidine 301 lines the a protein pocket. Residues glutamate 327 and glutamate 358 each coordinate Zn(2+).

This sequence belongs to the peptidase M24A family. Methionine aminopeptidase type 1 subfamily. Associates with the 60S ribosomal subunit of the 80S translational complex. Zn(2+) serves as cofactor. It depends on Co(2+) as a cofactor. The cofactor is Mn(2+). Fe(2+) is required as a cofactor.

It localises to the cytoplasm. The catalysed reaction is Release of N-terminal amino acids, preferentially methionine, from peptides and arylamides.. Its activity is regulated as follows. In contract to the MetAP 2 isoform, is not inhibited by the fungal metabolite fumagillin, an antiangiogenic drug. Functionally, cotranslationally removes the N-terminal methionine from nascent proteins. The N-terminal methionine is often cleaved when the second residue in the primary sequence is small and uncharged (Met-Ala-, Cys, Gly, Pro, Ser, Thr, or Val). Plays the major role in N-terminal methionine removal. Less efficient when the second residue is Val. This Saccharomyces cerevisiae (strain ATCC 204508 / S288c) (Baker's yeast) protein is Methionine aminopeptidase 1 (MAP1).